A 227-amino-acid chain; its full sequence is Probable proteasome subunit beta type-2 (227 aa).

A propeptide spans 1 to 6 (MITKTG) (removed in mature form). Residue Thr-7 is the Nucleophile of the active site.

This sequence belongs to the peptidase T1B family. The 26S proteasome consists of a 20S proteasome core and two 19S regulatory subunits. The 20S proteasome core is composed of 28 subunits that are arranged in four stacked rings, resulting in a barrel-shaped structure. The two end rings are each formed by seven alpha subunits, and the two central rings are each formed by seven beta subunits. The catalytic chamber with the active sites is on the inside of the barrel.

Its subcellular location is the cytoplasm. It localises to the nucleus. It catalyses the reaction Cleavage of peptide bonds with very broad specificity.. Its function is as follows. The proteasome degrades poly-ubiquitinated proteins in the cytoplasm and in the nucleus. It is essential for the regulated turnover of proteins and for the removal of misfolded proteins. The proteasome is a multicatalytic proteinase complex that is characterized by its ability to cleave peptides with Arg, Phe, Tyr, Leu, and Glu adjacent to the leaving group at neutral or slightly basic pH. It has an ATP-dependent proteolytic activity. In Encephalitozoon cuniculi (strain GB-M1) (Microsporidian parasite), this protein is Probable proteasome subunit beta type-2 (PUP1).